The sequence spans 252 residues: Protein UL24 homolog (252 aa).

The disordered stretch occupies residues 215-252 (SVLTKTSGENRSRASRQVAKNAPKNRIRRTAKKDAKRQ). The span at 237-252 (PKNRIRRTAKKDAKRQ) shows a compositional bias: basic residues.

The protein belongs to the herpesviridae UL24 family.

The protein resides in the virion. Its subcellular location is the host cytoplasm. It localises to the host nucleus. The protein localises to the host nucleolus. It is found in the host Golgi apparatus. Functionally, may participate in nuclear egress of viral particles. Plays a role in the dispersal of several host nucleolar proteins including NCL/nucleolin and NPM1. Since deletion of host NCL/nucleolin negatively impact on nuclear egress, UL24 supposedly acts on this process through its effect on host nucleoli. This chain is Protein UL24 homolog (U49), found in Homo sapiens (Human).